The sequence spans 101 residues: Small ribosomal subunit protein uS14 (101 aa).

Belongs to the universal ribosomal protein uS14 family. In terms of assembly, part of the 30S ribosomal subunit. Contacts proteins S3 and S10.

In terms of biological role, binds 16S rRNA, required for the assembly of 30S particles and may also be responsible for determining the conformation of the 16S rRNA at the A site. In Ralstonia pickettii (strain 12J), this protein is Small ribosomal subunit protein uS14.